The chain runs to 249 residues: Proteasome activator complex subunit 1 (249 aa).

The segment at 60–102 (PLDIPVPDPVKEKEKEERKKQQEKEDKDEKKKGEDEDKGPPCG) is disordered. The span at 68–98 (PVKEKEKEERKKQQEKEDKDEKKKGEDEDKG) shows a compositional bias: basic and acidic residues.

It belongs to the PA28 family. Heterodimer of PSME1 and PSME2, which forms a hexameric ring. PSME1 can form homoheptamers.

Implicated in immunoproteasome assembly and required for efficient antigen processing. The PA28 activator complex enhances the generation of class I binding peptides by altering the cleavage pattern of the proteasome. This is Proteasome activator complex subunit 1 (PSME1) from Sus scrofa (Pig).